The chain runs to 215 residues: Adenylate kinase (215 aa).

10-15 (GAGKGT) lines the ATP pocket. The NMP stretch occupies residues 30–59 (STGDMLRAAVKAETELGLKAKSVMDSGGLV). Residues threonine 31, arginine 36, 57–59 (GLV), 85–88 (GFPR), and glutamine 92 contribute to the AMP site. Residues 122-159 (GRRVHEGSGRIYHTIFNPPKVEGIDDVTGEPLLQRKDD) are LID. ATP contacts are provided by residues arginine 123 and 132 to 133 (IY). AMP-binding residues include arginine 156 and arginine 167. Glycine 201 is an ATP binding site.

It belongs to the adenylate kinase family. In terms of assembly, monomer.

It localises to the cytoplasm. The catalysed reaction is AMP + ATP = 2 ADP. The protein operates within purine metabolism; AMP biosynthesis via salvage pathway; AMP from ADP: step 1/1. Its function is as follows. Catalyzes the reversible transfer of the terminal phosphate group between ATP and AMP. Plays an important role in cellular energy homeostasis and in adenine nucleotide metabolism. This chain is Adenylate kinase, found in Pseudomonas syringae pv. syringae (strain B728a).